The following is a 644-amino-acid chain: Exoribonuclease 2 (644 aa).

The RNB domain maps to 189 to 516; it reads RQDLTALNFV…NHRLLKAVIK (328 aa). One can recognise an S1 motif domain in the interval 561–643; that stretch reads NTRFAAEIID…ETRSIIARPA (83 aa).

It belongs to the RNR ribonuclease family. RNase II subfamily.

Its subcellular location is the cytoplasm. The enzyme catalyses Exonucleolytic cleavage in the 3'- to 5'-direction to yield nucleoside 5'-phosphates.. Its function is as follows. Involved in mRNA degradation. Hydrolyzes single-stranded polyribonucleotides processively in the 3' to 5' direction. The sequence is that of Exoribonuclease 2 from Salmonella enteritidis PT4 (strain P125109).